The primary structure comprises 179 residues: Large ribosomal subunit protein uL5 (179 aa).

It belongs to the universal ribosomal protein uL5 family. In terms of assembly, part of the 50S ribosomal subunit; part of the 5S rRNA/L5/L18/L25 subcomplex. Contacts the 5S rRNA and the P site tRNA. Forms a bridge to the 30S subunit in the 70S ribosome.

In terms of biological role, this is one of the proteins that bind and probably mediate the attachment of the 5S RNA into the large ribosomal subunit, where it forms part of the central protuberance. In the 70S ribosome it contacts protein S13 of the 30S subunit (bridge B1b), connecting the 2 subunits; this bridge is implicated in subunit movement. Contacts the P site tRNA; the 5S rRNA and some of its associated proteins might help stabilize positioning of ribosome-bound tRNAs. The protein is Large ribosomal subunit protein uL5 of Herpetosiphon aurantiacus (strain ATCC 23779 / DSM 785 / 114-95).